The following is a 99-amino-acid chain: Protein RnfH (99 aa).

The protein belongs to the UPF0125 (RnfH) family.

The polypeptide is Protein RnfH (Tolumonas auensis (strain DSM 9187 / NBRC 110442 / TA 4)).